The sequence spans 668 residues: MAETGAPLIRLRGVGREYPSGEGVLRVLTDIDLDIGQGEFVAVMGASGSGKSTLMNILGCLDRPSSGSYRMDGREVARLGAGELAALRRETFGFIFQRYHLLSEMTALGNVEVPAIYRGLPADARRARARDLLERLGLGDRTGHRPGQLSGGQQQRVSIARALVNDARVILADEPTGALDSRSGDEVLGILERLNAEGRTVVIVTHDPRVAARAHRVVEIADGRIVADRRTGAPAADPGPGPAQAPQPAPQPAPVQAPVQARVQARAAVPVLGRLAEALRMALLSMRAHKLRSFLTMLGIIIGIASVVSVVALGEGSRRQVLQNIAGLGTNTLQIFPGRDFGDMRSGRVTTLVTADAAALARQPHVASVSPTVGTSATLRHGATEASAQISGVGEQYFDVAGVALTQGRGFDEADVAAMGQNVVIDENTRTSLFGDGPALGQVFMAGKVPLRVIGVAEAQNRGPGGSTSLTVYAPYTTVQARYLGSTSVSGLTLRVADDVDMALAEQMVADILTRRHGTRDFFIVNNDQIRQTITSTTQTLALLIAAIAVISLVVGGIGVMNIMLVSVTERIGEIGLRMAVGARRGDIRAQFLIEAVLVCVIGGIAGILAALGFGLAFERMSSDFTLVYSPLSMLAALASACAIGLAFGYLPAVNAAKLDPVKALQKG.

The ABC transporter domain occupies 9–247 (IRLRGVGREY…PGPGPAQAPQ (239 aa)). 45-52 (GASGSGKS) serves as a coordination point for ATP. Positions 230 to 257 (RTGAPAADPGPGPAQAPQPAPQPAPVQA) are disordered. Pro residues predominate over residues 237–255 (DPGPGPAQAPQPAPQPAPV). 4 consecutive transmembrane segments (helical) span residues 294–314 (FLTM…VALG), 541–561 (LALL…IGVM), 598–618 (LVCV…GLAF), and 634–654 (MLAA…LPAV).

This sequence belongs to the ABC transporter superfamily. Macrolide exporter (TC 3.A.1.122) family. As to quaternary structure, homodimer.

Its subcellular location is the cell inner membrane. In terms of biological role, non-canonical ABC transporter that contains transmembrane domains (TMD), which form a pore in the inner membrane, and an ATP-binding domain (NBD), which is responsible for energy generation. Confers resistance against macrolides. The polypeptide is Macrolide export ATP-binding/permease protein MacB 1/2 (Paracoccus denitrificans (strain Pd 1222)).